The chain runs to 478 residues: ATP synthase subunit beta (478 aa).

Residue G164–T171 participates in ATP binding.

This sequence belongs to the ATPase alpha/beta chains family. As to quaternary structure, F-type ATPases have 2 components, CF(1) - the catalytic core - and CF(0) - the membrane proton channel. CF(1) has five subunits: alpha(3), beta(3), gamma(1), delta(1), epsilon(1). CF(0) has three main subunits: a(1), b(2) and c(9-12). The alpha and beta chains form an alternating ring which encloses part of the gamma chain. CF(1) is attached to CF(0) by a central stalk formed by the gamma and epsilon chains, while a peripheral stalk is formed by the delta and b chains.

Its subcellular location is the cell membrane. The enzyme catalyses ATP + H2O + 4 H(+)(in) = ADP + phosphate + 5 H(+)(out). In terms of biological role, produces ATP from ADP in the presence of a proton gradient across the membrane. The catalytic sites are hosted primarily by the beta subunits. The sequence is that of ATP synthase subunit beta from Corynebacterium kroppenstedtii (strain DSM 44385 / JCM 11950 / CIP 105744 / CCUG 35717).